The chain runs to 212 residues: Cell division protein YtfB (212 aa).

Residues 34–50 (GIIIAAIVLVVGFLLPS) form a helical membrane-spanning segment. Residues 88–127 (NDPDQVAPVAPEPIQEGQPEEQPQTTQTQPFQPDSGIDNQ) are disordered. Over residues 99-120 (EPIQEGQPEEQPQTTQTQPFQP) the composition is skewed to low complexity. An oapA region spans residues 117-212 (PFQPDSGIDN…QPDGSFIRAR (96 aa)).

Belongs to the OapA family.

The protein resides in the cell inner membrane. Cell division protein whose function is related to the generation of a transient cell wall structure. Function is linked to the late stages of cell division. The chain is Cell division protein YtfB (ytfB) from Escherichia coli (strain K12).